We begin with the raw amino-acid sequence, 549 residues long: Urocanate hydratase (549 aa).

Residues 46 to 47 (GG), Gln-124, 170 to 172 (GMG), Glu-190, Arg-195, 236 to 237 (NA), 257 to 261 (QTSAH), 267 to 268 (YV), and Tyr-316 contribute to the NAD(+) site. Residue Cys-404 is part of the active site. Gly-486 is a binding site for NAD(+).

The protein belongs to the urocanase family. NAD(+) is required as a cofactor.

It localises to the cytoplasm. It carries out the reaction 4-imidazolone-5-propanoate = trans-urocanate + H2O. It participates in amino-acid degradation; L-histidine degradation into L-glutamate; N-formimidoyl-L-glutamate from L-histidine: step 2/3. Catalyzes the conversion of urocanate to 4-imidazolone-5-propionate. The polypeptide is Urocanate hydratase (Natranaerobius thermophilus (strain ATCC BAA-1301 / DSM 18059 / JW/NM-WN-LF)).